The sequence spans 1175 residues: DNA ligase 3 (1175 aa).

Residues 195–243 (HDFDNDNGDGDDGDGDDNDDDDGDGDSDSDKKKKKSSGGSGSDSGSKKK) form a disordered region. A compositionally biased stretch (acidic residues) spans 199-221 (NDNGDGDDGDGDDNDDDDGDGDS). Residue glutamate 281 coordinates ATP. Lysine 283 functions as the N6-AMP-lysine intermediate in the catalytic mechanism. The ATP site is built by arginine 288 and arginine 303. Positions 334 and 432 each coordinate Mg(2+). ATP contacts are provided by lysine 437, arginine 448, and lysine 452. 2 disordered regions span residues 612 to 669 (PVGK…LKFV) and 829 to 869 (KSSP…KRGR). Composition is skewed to low complexity over residues 622 to 635 (TTTTTTTTTTTTTT) and 829 to 859 (KSSPTTTSPTTTSPTTTSPKITSPSSSSSPS). Positions 883 to 976 (PSLPIFEDVN…KLLPLHEDYI (94 aa)) constitute a BRCT 1 domain. The disordered stretch occupies residues 984-1036 (PDYSQSSSSSSMSIEEEKIVVTTTSDDPSEGNQQQQDKKVIKESKIIQSKDHS). Residues 987–996 (SQSSSSSSMS) show a composition bias toward low complexity. Residues 1004–1018 (VTTTSDDPSEGNQQQ) are compositionally biased toward polar residues. A compositionally biased stretch (basic and acidic residues) spans 1019–1036 (QDKKVIKESKIIQSKDHS). The BRCT 2 domain occupies 1067–1174 (HLLSIFQECI…DLLDVKNYKL (108 aa)).

The protein belongs to the ATP-dependent DNA ligase family. Requires Mg(2+) as cofactor.

It is found in the nucleus. It catalyses the reaction ATP + (deoxyribonucleotide)n-3'-hydroxyl + 5'-phospho-(deoxyribonucleotide)m = (deoxyribonucleotide)n+m + AMP + diphosphate.. The alpha isoform interacts with DNA-repair protein XRCC1 and can correct defective DNA strand-break repair and sister chromatid exchange following treatment with ionizing radiation and alkylating agents. The beta isoform does not interact with XRCC1 and may be specifically involved in the completion of homologous recombination events that occur during meiotic prophase. This is DNA ligase 3 (lig3) from Dictyostelium discoideum (Social amoeba).